We begin with the raw amino-acid sequence, 274 residues long: 2,3,4,5-tetrahydropyridine-2,6-dicarboxylate N-succinyltransferase (274 aa).

2 residues coordinate substrate: Arg-106 and Asp-143.

Belongs to the transferase hexapeptide repeat family. As to quaternary structure, homotrimer.

Its subcellular location is the cytoplasm. It carries out the reaction (S)-2,3,4,5-tetrahydrodipicolinate + succinyl-CoA + H2O = (S)-2-succinylamino-6-oxoheptanedioate + CoA. Its pathway is amino-acid biosynthesis; L-lysine biosynthesis via DAP pathway; LL-2,6-diaminopimelate from (S)-tetrahydrodipicolinate (succinylase route): step 1/3. This Rickettsia prowazekii (strain Madrid E) protein is 2,3,4,5-tetrahydropyridine-2,6-dicarboxylate N-succinyltransferase.